Reading from the N-terminus, the 494-residue chain is UPF0371 protein SPT_0390 (494 aa).

The protein belongs to the UPF0371 family.

The protein is UPF0371 protein SPT_0390 of Streptococcus pneumoniae (strain Taiwan19F-14).